Reading from the N-terminus, the 513-residue chain is Glycogen synthase (513 aa).

Lys-47 is an ADP-alpha-D-glucose binding site.

It belongs to the glycosyltransferase 1 family. Bacterial/plant glycogen synthase subfamily.

The enzyme catalyses [(1-&gt;4)-alpha-D-glucosyl](n) + ADP-alpha-D-glucose = [(1-&gt;4)-alpha-D-glucosyl](n+1) + ADP + H(+). The protein operates within glycan biosynthesis; glycogen biosynthesis. Functionally, synthesizes alpha-1,4-glucan chains using ADP-glucose. The chain is Glycogen synthase from Pseudomonas paraeruginosa (strain DSM 24068 / PA7) (Pseudomonas aeruginosa (strain PA7)).